A 207-amino-acid polypeptide reads, in one-letter code: Thiamine-phosphate synthase (207 aa).

4-amino-2-methyl-5-(diphosphooxymethyl)pyrimidine is bound by residues 35-39 (QYRDK) and Asn67. Asp68 and Asp86 together coordinate Mg(2+). Position 105 (Thr105) interacts with 4-amino-2-methyl-5-(diphosphooxymethyl)pyrimidine. 132 to 134 (SVT) contributes to the 2-[(2R,5Z)-2-carboxy-4-methylthiazol-5(2H)-ylidene]ethyl phosphate binding site. A 4-amino-2-methyl-5-(diphosphooxymethyl)pyrimidine-binding site is contributed by Lys135. 2-[(2R,5Z)-2-carboxy-4-methylthiazol-5(2H)-ylidene]ethyl phosphate is bound at residue Gly162.

Belongs to the thiamine-phosphate synthase family. Mg(2+) serves as cofactor.

It carries out the reaction 2-[(2R,5Z)-2-carboxy-4-methylthiazol-5(2H)-ylidene]ethyl phosphate + 4-amino-2-methyl-5-(diphosphooxymethyl)pyrimidine + 2 H(+) = thiamine phosphate + CO2 + diphosphate. The enzyme catalyses 2-(2-carboxy-4-methylthiazol-5-yl)ethyl phosphate + 4-amino-2-methyl-5-(diphosphooxymethyl)pyrimidine + 2 H(+) = thiamine phosphate + CO2 + diphosphate. It catalyses the reaction 4-methyl-5-(2-phosphooxyethyl)-thiazole + 4-amino-2-methyl-5-(diphosphooxymethyl)pyrimidine + H(+) = thiamine phosphate + diphosphate. It participates in cofactor biosynthesis; thiamine diphosphate biosynthesis; thiamine phosphate from 4-amino-2-methyl-5-diphosphomethylpyrimidine and 4-methyl-5-(2-phosphoethyl)-thiazole: step 1/1. Functionally, condenses 4-methyl-5-(beta-hydroxyethyl)thiazole monophosphate (THZ-P) and 2-methyl-4-amino-5-hydroxymethyl pyrimidine pyrophosphate (HMP-PP) to form thiamine monophosphate (TMP). This is Thiamine-phosphate synthase from Pseudomonas putida (strain ATCC 47054 / DSM 6125 / CFBP 8728 / NCIMB 11950 / KT2440).